Consider the following 120-residue polypeptide: Large ribosomal subunit protein uL18 (120 aa).

It belongs to the universal ribosomal protein uL18 family. In terms of assembly, part of the 50S ribosomal subunit; part of the 5S rRNA/L5/L18/L25 subcomplex. Contacts the 5S and 23S rRNAs.

In terms of biological role, this is one of the proteins that bind and probably mediate the attachment of the 5S RNA into the large ribosomal subunit, where it forms part of the central protuberance. The chain is Large ribosomal subunit protein uL18 from Chloroflexus aurantiacus (strain ATCC 29364 / DSM 637 / Y-400-fl).